We begin with the raw amino-acid sequence, 192 residues long: Immunity protein YqcF (192 aa).

Probably interacts with cognate toxin YqcG but not with other non-cognate toxins. The interaction inhibits the toxic activity of YqcG.

Its subcellular location is the cytoplasm. Immunity component of one of 6 LXG toxin-immunity modules in this strain. They promote kin selection, mediate competition in biofilms, and drive spatial segregation of different strains, indicating that LXG toxins may help avoid warfare between strains in biofilms. Mediates intercellular competition during biofilm formation; disruption of the operon disadvantages the bacteria, but overexpression of the cognate immunity protein restores growth in competition with wild-type. In situ neutralizes the toxic effect of cognate toxin YqcG. Neutralizes the toxic activity of cognate toxin YqcG upon expression in E.coli. Does not have immunity protein activity on other LXG toxins. In Bacillus subtilis (strain 168), this protein is Immunity protein YqcF (yqcF).